The primary structure comprises 119 residues: Large ribosomal subunit protein bL20 (119 aa).

The protein belongs to the bacterial ribosomal protein bL20 family.

In terms of biological role, binds directly to 23S ribosomal RNA and is necessary for the in vitro assembly process of the 50S ribosomal subunit. It is not involved in the protein synthesizing functions of that subunit. This chain is Large ribosomal subunit protein bL20, found in Coxiella burnetii (strain CbuK_Q154) (Coxiella burnetii (strain Q154)).